A 263-amino-acid polypeptide reads, in one-letter code: Taurine import ATP-binding protein TauB (263 aa).

The 232-residue stretch at Leu-4–Ser-235 folds into the ABC transporter domain. Gly-40–Ser-47 contributes to the ATP binding site.

Belongs to the ABC transporter superfamily. Taurine importer (TC 3.A.1.17.1) family. In terms of assembly, the complex is composed of two ATP-binding proteins (TauB), two transmembrane proteins (TauC) and a solute-binding protein (TauA).

It is found in the cell inner membrane. The catalysed reaction is taurine(out) + ATP + H2O = taurine(in) + ADP + phosphate + H(+). Its function is as follows. Part of the ABC transporter complex TauABC involved in taurine import. Responsible for energy coupling to the transport system. This is Taurine import ATP-binding protein TauB from Pseudomonas aeruginosa (strain UCBPP-PA14).